We begin with the raw amino-acid sequence, 4423 residues long: Nonribosomal peptide synthetase 7 (4423 aa).

The interval 572–986 is condensation 1; that stretch reads NIYPCTSIQE…LISQDDKNRI (415 aa). The tract at residues 1007 to 1404 is adenylation 1; sequence ERIQKQPSAV…GRRDTQVKIR (398 aa). Residues 1533-1609 form the Carrier 1 domain; the sequence is LPLTETEQKL…DLARTIDERN (77 aa). An O-(pantetheine 4'-phosphoryl)serine modification is found at S1570. Residues 1657-2066 are condensation 2; it reads EDVYPCTSLQ…QFLDETHHET (410 aa). Residues 2102-2499 are adenylation 2; that stretch reads RDVAKEQPDS…YIGRMGSEVK (398 aa). Positions 2642–2718 constitute a Carrier 2 domain; that stretch reads VPQTRIGKKL…DCARILEADQ (77 aa). S2679 is modified (O-(pantetheine 4'-phosphoryl)serine). The interval 2764 to 3170 is condensation 3; the sequence is EDVYPCTPMQ…AASASSDDQT (407 aa). The segment at 3205–3609 is adenylation 3; sequence RSLETRPDSQ…GRGDSQIKIR (405 aa). The region spanning 3731-3804 is the Carrier 3 domain; it reads TESEYITRTL…KMAVVAQHQT (74 aa). S3765 carries the O-(pantetheine 4'-phosphoryl)serine modification. Positions 3875–4278 are condensation 4; sequence TFVLDAEGDL…SQDEKLALLG (404 aa). Residues 4288 to 4300 are compositionally biased toward polar residues; sequence KLTKLQRVNSPKE. A disordered region spans residues 4288-4312; sequence KLTKLQRVNSPKEQTLRKDKPTNGV.

This sequence belongs to the NRP synthetase family.

It functions in the pathway secondary metabolite biosynthesis. In terms of biological role, nonribosomal peptide synthetase; part of the gene cluster that mediates the biosynthesis of the lipopeptide fusaristatin A. Fusaristatin A consists of a polyketide chain linked to three amino acid residues glutamine (Gln), dehydroalanine (dehydro-Ala), and beta-aminoisobutyric acid. The biosynthesis starts with formation of a linear polyketide chain by the highly reducing polyketide synthase PKS6. The gene cluster does not contain an acyl-CoA ligase or an acyl-transferase, and it is therefore predicted that the polyketide is transferred directly to the nonribosomal peptide synthetase NRPS7. Modules 1-3 from NRPS7 incorporate dehydro-Ala, Gln, and beta-aminoisobutyric acid in the compound, which is released by cyclization. The beta-aminoisobutyric acid units are most likely not freely available to the NRPS, but can be synthesized from thymine, which requires a dehydrogenase, a monooxygenase, and an aminotransferase. The fusaristatin A cluster contains a cytochrome P450 monooxygenase (FGSG_08207) and an aminotransferase (FGSG_17085), which theoretically can perform two of the enzymatic steps. The enzymes may however also be involved in biosynthesis of dehydroalanine or modification of the polyketide. The dehydro-Ala residue can be a result of cyclization, where serine is dehydrated. The last gene of the cluster encodes a protein with an A/B barrel domain found in variable enzymes, which hampers functional prediction. The sequence is that of Nonribosomal peptide synthetase 7 from Gibberella zeae (strain ATCC MYA-4620 / CBS 123657 / FGSC 9075 / NRRL 31084 / PH-1) (Wheat head blight fungus).